We begin with the raw amino-acid sequence, 464 residues long: tRNA-2-methylthio-N(6)-dimethylallyladenosine synthase (464 aa).

In terms of domain architecture, MTTase N-terminal spans 19-135 (GSYWITTFGC…LENLLERVDL (117 aa)). Cys-28, Cys-64, Cys-98, Cys-170, Cys-174, and Cys-177 together coordinate [4Fe-4S] cluster. Residues 156–393 (RDSSICGWVN…NELVETTSRK (238 aa)) form the Radical SAM core domain. Positions 396-464 (QRYLNNIESV…SFSLSGQIYK (69 aa)) constitute a TRAM domain.

It belongs to the methylthiotransferase family. MiaB subfamily. In terms of assembly, monomer. Requires [4Fe-4S] cluster as cofactor.

The protein resides in the cytoplasm. The catalysed reaction is N(6)-dimethylallyladenosine(37) in tRNA + (sulfur carrier)-SH + AH2 + 2 S-adenosyl-L-methionine = 2-methylsulfanyl-N(6)-dimethylallyladenosine(37) in tRNA + (sulfur carrier)-H + 5'-deoxyadenosine + L-methionine + A + S-adenosyl-L-homocysteine + 2 H(+). Catalyzes the methylthiolation of N6-(dimethylallyl)adenosine (i(6)A), leading to the formation of 2-methylthio-N6-(dimethylallyl)adenosine (ms(2)i(6)A) at position 37 in tRNAs that read codons beginning with uridine. The polypeptide is tRNA-2-methylthio-N(6)-dimethylallyladenosine synthase (Prochlorococcus marinus subsp. pastoris (strain CCMP1986 / NIES-2087 / MED4)).